Reading from the N-terminus, the 490-residue chain is Aspartyl/glutamyl-tRNA(Asn/Gln) amidotransferase subunit B (490 aa).

This sequence belongs to the GatB/GatE family. GatB subfamily. In terms of assembly, heterotrimer of A, B and C subunits.

It carries out the reaction L-glutamyl-tRNA(Gln) + L-glutamine + ATP + H2O = L-glutaminyl-tRNA(Gln) + L-glutamate + ADP + phosphate + H(+). The enzyme catalyses L-aspartyl-tRNA(Asn) + L-glutamine + ATP + H2O = L-asparaginyl-tRNA(Asn) + L-glutamate + ADP + phosphate + 2 H(+). In terms of biological role, allows the formation of correctly charged Asn-tRNA(Asn) or Gln-tRNA(Gln) through the transamidation of misacylated Asp-tRNA(Asn) or Glu-tRNA(Gln) in organisms which lack either or both of asparaginyl-tRNA or glutaminyl-tRNA synthetases. The reaction takes place in the presence of glutamine and ATP through an activated phospho-Asp-tRNA(Asn) or phospho-Glu-tRNA(Gln). The polypeptide is Aspartyl/glutamyl-tRNA(Asn/Gln) amidotransferase subunit B (Zymomonas mobilis subsp. mobilis (strain ATCC 31821 / ZM4 / CP4)).